Here is a 393-residue protein sequence, read N- to C-terminus: CCA-adding enzyme (393 aa).

2 residues coordinate ATP: Gly-27 and Arg-30. Gly-27 and Arg-30 together coordinate CTP. Residues Asp-40 and Asp-42 each contribute to the Mg(2+) site. ATP is bound by residues Arg-111, Asp-154, Arg-157, Arg-160, and Arg-163. Residues Arg-111, Asp-154, Arg-157, Arg-160, and Arg-163 each coordinate CTP.

Belongs to the tRNA nucleotidyltransferase/poly(A) polymerase family. Bacterial CCA-adding enzyme type 3 subfamily. As to quaternary structure, homodimer. Mg(2+) is required as a cofactor.

It carries out the reaction a tRNA precursor + 2 CTP + ATP = a tRNA with a 3' CCA end + 3 diphosphate. The catalysed reaction is a tRNA with a 3' CCA end + 2 CTP + ATP = a tRNA with a 3' CCACCA end + 3 diphosphate. Its function is as follows. Catalyzes the addition and repair of the essential 3'-terminal CCA sequence in tRNAs without using a nucleic acid template. Adds these three nucleotides in the order of C, C, and A to the tRNA nucleotide-73, using CTP and ATP as substrates and producing inorganic pyrophosphate. tRNA 3'-terminal CCA addition is required both for tRNA processing and repair. Also involved in tRNA surveillance by mediating tandem CCA addition to generate a CCACCA at the 3' terminus of unstable tRNAs. While stable tRNAs receive only 3'-terminal CCA, unstable tRNAs are marked with CCACCA and rapidly degraded. This is CCA-adding enzyme from Listeria monocytogenes serotype 4b (strain CLIP80459).